The sequence spans 185 residues: Ribosome-recycling factor (185 aa).

Belongs to the RRF family.

It localises to the cytoplasm. Its function is as follows. Responsible for the release of ribosomes from messenger RNA at the termination of protein biosynthesis. May increase the efficiency of translation by recycling ribosomes from one round of translation to another. This chain is Ribosome-recycling factor, found in Pseudoalteromonas atlantica (strain T6c / ATCC BAA-1087).